The primary structure comprises 112 residues: UPF0342 protein STER_0693 (112 aa).

Belongs to the UPF0342 family.

In Streptococcus thermophilus (strain ATCC BAA-491 / LMD-9), this protein is UPF0342 protein STER_0693.